The following is a 547-amino-acid chain: 4-coumarate-CoA ligase 1 (547 aa).

ATP-binding positions include 190–194 (SSGTT), His-238, 310–312 (AAP), 332–333 (QG), Thr-337, Asp-421, Arg-436, and Lys-527. The SBD1 stretch occupies residues 263–332 (EIVRLMELVE…EKLPNAKLGQ (70 aa)). The interval 333–400 (GYGMTEAGPV…IRGNQIMKGY (68 aa)) is SBD2.

The protein belongs to the ATP-dependent AMP-binding enzyme family. Mostly expressed in stems, and, to a lower extent, in bulbs.

It catalyses the reaction (E)-4-coumarate + ATP + CoA = (E)-4-coumaroyl-CoA + AMP + diphosphate. The protein operates within phytoalexin biosynthesis; 3,4',5-trihydroxystilbene biosynthesis; 3,4',5-trihydroxystilbene from trans-4-coumarate: step 1/2. Its function is as follows. Produces CoA thioesters of a variety of hydroxy- and methoxy-substituted cinnamic acids, which are used to synthesize several phenylpropanoid-derived compounds, including anthocyanins, flavonoids, isoflavonoids, coumarins, lignin, suberin and wall-bound phenolics. The polypeptide is 4-coumarate-CoA ligase 1 (Narcissus pseudonarcissus (Daffodil)).